The sequence spans 167 residues: NAD(P)H-quinone oxidoreductase subunit I, chloroplastic (167 aa).

4Fe-4S ferredoxin-type domains follow at residues 55-84 (GRIH…VDWK) and 95-124 (LNYS…MTEE). Residues C64, C67, C70, C74, C104, C107, C110, and C114 each contribute to the [4Fe-4S] cluster site.

This sequence belongs to the complex I 23 kDa subunit family. As to quaternary structure, NDH is composed of at least 16 different subunits, 5 of which are encoded in the nucleus. It depends on [4Fe-4S] cluster as a cofactor.

The protein localises to the plastid. Its subcellular location is the chloroplast thylakoid membrane. It carries out the reaction a plastoquinone + NADH + (n+1) H(+)(in) = a plastoquinol + NAD(+) + n H(+)(out). The enzyme catalyses a plastoquinone + NADPH + (n+1) H(+)(in) = a plastoquinol + NADP(+) + n H(+)(out). In terms of biological role, NDH shuttles electrons from NAD(P)H:plastoquinone, via FMN and iron-sulfur (Fe-S) centers, to quinones in the photosynthetic chain and possibly in a chloroplast respiratory chain. The immediate electron acceptor for the enzyme in this species is believed to be plastoquinone. Couples the redox reaction to proton translocation, and thus conserves the redox energy in a proton gradient. This is NAD(P)H-quinone oxidoreductase subunit I, chloroplastic from Eucalyptus globulus subsp. globulus (Tasmanian blue gum).